Reading from the N-terminus, the 401-residue chain is Argininosuccinate synthase (401 aa).

ATP-binding positions include 10–18 (AYSGGVDTS) and Ala38. Residue Tyr89 participates in L-citrulline binding. Gly119 contacts ATP. The L-aspartate site is built by Thr121, Asn125, and Asp126. Residue Asn125 participates in L-citrulline binding. 5 residues coordinate L-citrulline: Arg129, Ser177, Ser186, Glu262, and Tyr274.

The protein belongs to the argininosuccinate synthase family. Type 1 subfamily. In terms of assembly, homotetramer.

Its subcellular location is the cytoplasm. It catalyses the reaction L-citrulline + L-aspartate + ATP = 2-(N(omega)-L-arginino)succinate + AMP + diphosphate + H(+). The protein operates within amino-acid biosynthesis; L-arginine biosynthesis; L-arginine from L-ornithine and carbamoyl phosphate: step 2/3. In Prochlorococcus marinus (strain MIT 9303), this protein is Argininosuccinate synthase.